Reading from the N-terminus, the 312-residue chain is Regulation of nuclear pre-mRNA domain-containing protein 1A (312 aa).

Position 2 is an N-acetylserine (S2). The CID domain maps to 2–133 (SAFSEAALEK…QLKQALYGDK (132 aa)). Phosphoserine is present on residues S153, S156, and S285. Positions 244–286 (LADFLRCQKEALAEKEHKLEEYKRKLARVSLVRKELRSRIQSL) form a coiled coil.

This sequence belongs to the UPF0400 (RTT103) family. In terms of assembly, may form a heterodimer with RPRD1B. Associates with the RNA polymerase II subunit POLR2A (via CTD phosphorylated at 'Ser-2' and 'Ser-7' of the heptad repeats).

The protein localises to the nucleus. Interacts with phosphorylated C-terminal heptapeptide repeat domain (CTD) of the largest RNA polymerase II subunit POLR2A, and participates in dephosphorylation of the CTD by RPAP2. May act as a negative regulator of cyclin-D1 (CCND1) and cyclin-E (CCNE1) in the cell cycle. The polypeptide is Regulation of nuclear pre-mRNA domain-containing protein 1A (RPRD1A) (Pongo abelii (Sumatran orangutan)).